Consider the following 1237-residue polypeptide: Cilia- and flagella-associated protein 61 (1237 aa).

A disordered region spans residues Gln-278–Val-301. Residues Ser-281 to Leu-290 show a composition bias toward basic and acidic residues.

As to quaternary structure, component of axonemal radial spokes, the protein complexes that link the outer microtubule doublets with the central pair of microtubules. Interacts with CFAP91/MAATS1, ODAD2/ARMC4, RSPH3A, ROPN1, ROPN1L and RSPH9. Interacts with DYNLT1, DYNC1I2 and TUBB3. Interacts with WDR35, IFT22 and IFT81.

The protein localises to the cytoplasm. It localises to the cytoskeleton. Its subcellular location is the flagellum axoneme. Its function is as follows. Involved in sperm flagellum assembly. Plays an essential role in the formation of the radial spokes in flagellum axoneme. This Homo sapiens (Human) protein is Cilia- and flagella-associated protein 61.